A 595-amino-acid chain; its full sequence is Chaperone protein HscA homolog (595 aa).

This sequence belongs to the heat shock protein 70 family.

Its function is as follows. Chaperone involved in the maturation of iron-sulfur cluster-containing proteins. Has a low intrinsic ATPase activity which is markedly stimulated by HscB. The polypeptide is Chaperone protein HscA homolog (Rickettsia akari (strain Hartford)).